Here is a 141-residue protein sequence, read N- to C-terminus: MALERTLSIIKPDAVAKNVIGQIYSRFENAGLKIVAARMAHLSRADAEKFYAVHAERPFFKDLVEFMISGPVMIQVLEGEDAILKNRDLMGATDPKKAEKGTIRADFADSIDANAVHGSDAPETARVEIAFFFPEMNVYSR.

Residues Lys-11, Phe-59, Arg-87, Thr-93, Arg-104, and Asn-114 each coordinate ATP. Residue His-117 is the Pros-phosphohistidine intermediate of the active site.

The protein belongs to the NDK family. In terms of assembly, homotetramer. Requires Mg(2+) as cofactor.

The protein resides in the cytoplasm. The enzyme catalyses a 2'-deoxyribonucleoside 5'-diphosphate + ATP = a 2'-deoxyribonucleoside 5'-triphosphate + ADP. It catalyses the reaction a ribonucleoside 5'-diphosphate + ATP = a ribonucleoside 5'-triphosphate + ADP. Its function is as follows. Major role in the synthesis of nucleoside triphosphates other than ATP. The ATP gamma phosphate is transferred to the NDP beta phosphate via a ping-pong mechanism, using a phosphorylated active-site intermediate. The polypeptide is Nucleoside diphosphate kinase (Burkholderia thailandensis (strain ATCC 700388 / DSM 13276 / CCUG 48851 / CIP 106301 / E264)).